The chain runs to 294 residues: ATP synthase gamma chain (294 aa).

This sequence belongs to the ATPase gamma chain family. F-type ATPases have 2 components, CF(1) - the catalytic core - and CF(0) - the membrane proton channel. CF(1) has five subunits: alpha(3), beta(3), gamma(1), delta(1), epsilon(1). CF(0) has three main subunits: a, b and c.

It localises to the cell inner membrane. In terms of biological role, produces ATP from ADP in the presence of a proton gradient across the membrane. The gamma chain is believed to be important in regulating ATPase activity and the flow of protons through the CF(0) complex. The protein is ATP synthase gamma chain of Caulobacter sp. (strain K31).